Reading from the N-terminus, the 294-residue chain is Lipoyl synthase 1 (294 aa).

Residues C38, C43, C49, C64, C68, C71, and S279 each contribute to the [4Fe-4S] cluster site. The 219-residue stretch at 50–268 (FAGGTATFLI…EEGQTRFGFL (219 aa)) folds into the Radical SAM core domain.

It belongs to the radical SAM superfamily. Lipoyl synthase family. The cofactor is [4Fe-4S] cluster.

It localises to the cytoplasm. It catalyses the reaction [[Fe-S] cluster scaffold protein carrying a second [4Fe-4S](2+) cluster] + N(6)-octanoyl-L-lysyl-[protein] + 2 oxidized [2Fe-2S]-[ferredoxin] + 2 S-adenosyl-L-methionine + 4 H(+) = [[Fe-S] cluster scaffold protein] + N(6)-[(R)-dihydrolipoyl]-L-lysyl-[protein] + 4 Fe(3+) + 2 hydrogen sulfide + 2 5'-deoxyadenosine + 2 L-methionine + 2 reduced [2Fe-2S]-[ferredoxin]. Its pathway is protein modification; protein lipoylation via endogenous pathway; protein N(6)-(lipoyl)lysine from octanoyl-[acyl-carrier-protein]: step 2/2. Catalyzes the radical-mediated insertion of two sulfur atoms into the C-6 and C-8 positions of the octanoyl moiety bound to the lipoyl domains of lipoate-dependent enzymes, thereby converting the octanoylated domains into lipoylated derivatives. In Prochlorococcus marinus (strain SARG / CCMP1375 / SS120), this protein is Lipoyl synthase 1.